The chain runs to 161 residues: Large ribosomal subunit protein uL15 (161 aa).

The interval 1–43 (MKLSDIADNAGARKKRMRVGRGIGSGKGKTSGRGGKGQTARSG) is disordered. Gly residues predominate over residues 21-37 (RGIGSGKGKTSGRGGKG).

The protein belongs to the universal ribosomal protein uL15 family. As to quaternary structure, part of the 50S ribosomal subunit.

In terms of biological role, binds to the 23S rRNA. The protein is Large ribosomal subunit protein uL15 of Bradyrhizobium sp. (strain ORS 278).